The following is a 346-amino-acid chain: 4-hydroxy-2-oxovalerate aldolase 2 (346 aa).

Residues 8-260 (VTVHDMTLRD…ETGVDVFKIQ (253 aa)) form the Pyruvate carboxyltransferase domain. Residue 16 to 17 (RD) coordinates substrate. Mn(2+) is bound at residue Asp17. His20 serves as the catalytic Proton acceptor. Ser170 and His199 together coordinate substrate. The Mn(2+) site is built by His199 and His201. Tyr290 lines the substrate pocket.

It belongs to the 4-hydroxy-2-oxovalerate aldolase family.

It carries out the reaction (S)-4-hydroxy-2-oxopentanoate = acetaldehyde + pyruvate. The protein is 4-hydroxy-2-oxovalerate aldolase 2 (bphX3) of Metapseudomonas furukawaii (Pseudomonas furukawaii).